The following is a 379-amino-acid chain: Nematocin receptor 1 (379 aa).

The Extracellular portion of the chain corresponds to 19 to 48 (HNLYLFQMLELQENITDSQPMDPPSLEIMM). Asn-32 carries N-linked (GlcNAc...) asparagine glycosylation. Residues 49-69 (LHHLMIILVTLFGNTLLIYVI) traverse the membrane as a helical segment. Residues 70-95 (YKNNAVLRRKRVTPVQMLMLHMCAAD) lie on the Cytoplasmic side of the membrane. Residues 96 to 116 (ILFALISVGPTMAITATVPFF) form a helical membrane-spanning segment. Residues 117–124 (YGPNLLCK) lie on the Extracellular side of the membrane. The cysteines at positions 123 and 196 are disulfide-linked. The helical transmembrane segment at 125–145 (LTKFLQVIPMYASSFLLVAIS) threads the bilayer. The Cytoplasmic portion of the chain corresponds to 146–168 (ADRYQAICRPLASMKSSIYNRPA). The chain crosses the membrane as a helical span at residues 169 to 189 (LYSGIAWTAAILFSTPQLYLF). The Extracellular segment spans residues 190 to 207 (EKRNGDCSENYTTALQYQ). Asn-199 carries an N-linked (GlcNAc...) asparagine glycan. The chain crosses the membrane as a helical span at residues 208–228 (LYVCLFNSVVWLLPSAIAGWL). The Cytoplasmic portion of the chain corresponds to 229 to 289 (YLCVCKAVWK…DRRRVQTVKL (61 aa)). A helical membrane pass occupies residues 290 to 310 (TLTIVAANFVLWAPFCITSVI). At 311–320 (DAVWPTAINS) the chain is on the extracellular side. Asn-319 is a glycosylation site (N-linked (GlcNAc...) asparagine). Residues 321 to 343 (TFATYIMFFGNLNSCMNPWLWFH) traverse the membrane as a helical segment. The Cytoplasmic portion of the chain corresponds to 344 to 379 (FNRKQLKRACPCRKSSEPLIQSLVYVHVMTSEQSDF).

This sequence belongs to the G-protein coupled receptor 1 family. Vasopressin/oxytocin receptor subfamily. Detected in the left ASE gustatory neuron, the chemosensory neuron pairs ASH and ADF, and the PQR tail neuron. In males, detected in hook and tail sensory neurons involved in vulval sensing and hermaphrodite contact, and in spicule protractor muscles.

The protein localises to the cell membrane. Receptor for nematocin. The activity of this receptor is mediated by G proteins which activate a phosphatidylinositol-calcium second messenger system. The activity of this receptor may be modulated by ntr-2, leading to reduced intracellular cAMP production. Plays a role in gustatory associative learning. Also plays a role in male mating behavior. The chain is Nematocin receptor 1 from Caenorhabditis elegans.